A 529-amino-acid chain; its full sequence is Peptide chain release factor 3 (529 aa).

The tr-type G domain maps to asparagine 11–lysine 280. GTP is bound by residues serine 20–threonine 27, aspartate 88–histidine 92, and asparagine 142–aspartate 145.

This sequence belongs to the TRAFAC class translation factor GTPase superfamily. Classic translation factor GTPase family. PrfC subfamily.

The protein localises to the cytoplasm. Functionally, increases the formation of ribosomal termination complexes and stimulates activities of RF-1 and RF-2. It binds guanine nucleotides and has strong preference for UGA stop codons. It may interact directly with the ribosome. The stimulation of RF-1 and RF-2 is significantly reduced by GTP and GDP, but not by GMP. The protein is Peptide chain release factor 3 of Acinetobacter baylyi (strain ATCC 33305 / BD413 / ADP1).